Consider the following 95-residue polypeptide: uncharacterized protein (95 aa).

Residues 27–47 (SFGLAIIGILLIACEIILFLT) form a helical membrane-spanning segment.

It localises to the membrane. This is an uncharacterized protein from Homo sapiens (Human).